A 204-amino-acid polypeptide reads, in one-letter code: NAD(P)H dehydrogenase (quinone) FQR1 (204 aa).

The Flavodoxin-like domain occupies 5–192; it reads VYIVYYSMYG…QQAFHQGQYI (188 aa). Residues 11–15, 112–165, and His-136 each bind FMN; these read SMYGH and IFYS…SPYG. Tyr-13 serves as a coordination point for NAD(+).

The protein belongs to the WrbA family. The cofactor is FMN.

It is found in the cell membrane. The enzyme catalyses a quinone + NADH + H(+) = a quinol + NAD(+). It carries out the reaction a quinone + NADPH + H(+) = a quinol + NADP(+). Functionally, catalyzes the transfer of electrons from NADH and NADPH to several quinones in vitro. May act as detoxification enzyme, and protect against auxin-induced oxidative stress. The polypeptide is NAD(P)H dehydrogenase (quinone) FQR1 (Arabidopsis thaliana (Mouse-ear cress)).